The chain runs to 477 residues: POC1 centriolar protein homolog B (477 aa).

WD repeat units follow at residues 16-55 (GHKA…RAYR), 58-97 (GHKD…KSSE), 100-139 (AHTA…FLYS), 142-181 (RHTH…CVNN), 183-223 (SDSV…LLQH), 226-265 (VHSC…LIYT), and 268-307 (GHTG…VHYR). The stretch at 449-469 (EQRLSLTEDKLKDCLENQQKL) forms a coiled coil.

It belongs to the WD repeat POC1 family. As to quaternary structure, interacts with POC1A. Interacts with FAM161A. Interacts with CEP44; the interaction is direct and recruits POC1B to centriolar microtubules. Forms a microtubule-associated complex with POC5, CETN2 and FAM161A. Interacts with CCDC15. Post-translationally, phosphorylated in mitotic cells that may be mediated by CDK1.

The protein localises to the cytoplasm. It is found in the cytoskeleton. The protein resides in the microtubule organizing center. Its subcellular location is the centrosome. It localises to the centriole. The protein localises to the cilium basal body. It is found in the spindle pole. Its function is as follows. Plays an important role in centriole assembly and/or stability and ciliogenesis. Involved in early steps of centriole duplication, as well as in the later steps of centriole length control. Acts in concert with POC1A to ensure centriole integrity and proper mitotic spindle formation. Required for primary cilia formation, ciliary length and also cell proliferation. Required for retinal integrity. Acts as a positive regulator of centriole elongation. This Rattus norvegicus (Rat) protein is POC1 centriolar protein homolog B (Poc1b).